The following is a 139-amino-acid chain: I-Kappa-B like protein N1 (139 aa).

3 ANK repeats span residues 16-48 (NGEN…QYLL), 54-87 (EGRK…DVNG), and 92-122 (TGDT…NINA).

This sequence belongs to the polydnaviridae I-Kappa-B-like protein family.

Its function is as follows. Suppresses the host immune response through NF-kappa-B inactivation. Possesses ankyrin repeat domain required for NF-kappa-B binding but lack the regulatory regions required for dissociation from NF-kappa-B and degradation. Therefore, prevents host NF-kappa-B release and subsequent activation. The polypeptide is I-Kappa-B like protein N1 (N2) (Microplitis demolitor bracovirus (isolate Webb) (MdBV)).